Here is a 372-residue protein sequence, read N- to C-terminus: Chloroplast protein FOR GROWTH AND FERTILITY 2 (372 aa).

The interval 1-20 is disordered; that stretch reads MDRLLQPPSSHSIAPSKFQS. The N-terminal 78 residues, 1–78, are a transit peptide targeting the chloroplast; the sequence is MDRLLQPPSS…NQSSNFLIAS (78 aa). Residues 7–20 are compositionally biased toward polar residues; sequence PPSSHSIAPSKFQS. Helical transmembrane passes span 109 to 129, 161 to 181, 195 to 215, 231 to 251, 281 to 301, 309 to 329, and 352 to 372; these read VILV…PPAF, FFAG…LAPL, ALWG…FLLL, VVGL…SEMP, GIVH…LALP, FLIM…VFIG, and LVAI…FSLY.

As to expression, mostly expressed in leaves, stems and flowers, to a lower extent, in roots, floral bud, inflorescence and siliques, and, barely, in seedlings.

It localises to the plastid. The protein localises to the chloroplast membrane. Its subcellular location is the plastid membrane. In terms of biological role, together with CGF1, essential protein which supports female gametogenesis and embryogenesis, probably by securing local energy supply. This is Chloroplast protein FOR GROWTH AND FERTILITY 2 from Arabidopsis thaliana (Mouse-ear cress).